The following is a 183-amino-acid chain: Putative calmodulin-like protein 2 (183 aa).

4 EF-hand domains span residues 7–42 (EQIAEFREAFNLFDKDGDGTITSKELGTVMGSLGQS), 43–78 (PTEAELKKMVEEVDADGSGSIEFEEFLGLLARKLRD), 80–115 (GAEDDIREAFRVFDKDQNGFITPDELRHVMANLGDP), and 116–151 (LSDDELADMLHEADSDGDGQINYNEFLKVMMAKRRQ). Residues aspartate 20, aspartate 22, aspartate 24, threonine 26, glutamate 31, aspartate 56, aspartate 58, serine 60, serine 62, glutamate 67, aspartate 93, aspartate 95, asparagine 97, glutamate 104, aspartate 129, aspartate 131, aspartate 133, glutamine 135, and glutamate 140 each contribute to the Ca(2+) site. The segment at 154 to 183 (MEGHGSGGHRSSNSHKKSGCCGPNSSCTIL) is disordered. S-palmitoyl cysteine attachment occurs at residues cysteine 173 and cysteine 174. Cysteine 180 bears the Cysteine methyl ester mark. The S-farnesyl cysteine moiety is linked to residue cysteine 180. A propeptide spans 181–183 (TIL) (removed in mature form).

The protein belongs to the calmodulin family.

Its subcellular location is the membrane. In terms of biological role, potential calcium sensor. This chain is Putative calmodulin-like protein 2 (CML2), found in Oryza sativa subsp. japonica (Rice).